The sequence spans 96 residues: Exodeoxyribonuclease 7 small subunit (96 aa).

Basic and acidic residues predominate over residues 61 to 79; the sequence is ALTKDESQKTNKTGFRTES. Residues 61 to 96 form a disordered region; that stretch reads ALTKDESQKTNKTGFRTESKSTSQTSSDSVLEEDLF. Residues 80–89 show a composition bias toward low complexity; the sequence is KSTSQTSSDS.

It belongs to the XseB family. As to quaternary structure, heterooligomer composed of large and small subunits.

It is found in the cytoplasm. The enzyme catalyses Exonucleolytic cleavage in either 5'- to 3'- or 3'- to 5'-direction to yield nucleoside 5'-phosphates.. In terms of biological role, bidirectionally degrades single-stranded DNA into large acid-insoluble oligonucleotides, which are then degraded further into small acid-soluble oligonucleotides. The polypeptide is Exodeoxyribonuclease 7 small subunit (Leptospira borgpetersenii serovar Hardjo-bovis (strain JB197)).